The chain runs to 150 residues: D-aminoacyl-tRNA deacylase (150 aa).

The Gly-cisPro motif, important for rejection of L-amino acids motif lies at 137–138 (GP).

It belongs to the DTD family. Homodimer.

The protein resides in the cytoplasm. The catalysed reaction is glycyl-tRNA(Ala) + H2O = tRNA(Ala) + glycine + H(+). It carries out the reaction a D-aminoacyl-tRNA + H2O = a tRNA + a D-alpha-amino acid + H(+). An aminoacyl-tRNA editing enzyme that deacylates mischarged D-aminoacyl-tRNAs. Also deacylates mischarged glycyl-tRNA(Ala), protecting cells against glycine mischarging by AlaRS. Acts via tRNA-based rather than protein-based catalysis; rejects L-amino acids rather than detecting D-amino acids in the active site. By recycling D-aminoacyl-tRNA to D-amino acids and free tRNA molecules, this enzyme counteracts the toxicity associated with the formation of D-aminoacyl-tRNA entities in vivo and helps enforce protein L-homochirality. In Listeria monocytogenes serotype 4b (strain CLIP80459), this protein is D-aminoacyl-tRNA deacylase.